Here is a 427-residue protein sequence, read N- to C-terminus: Enolase (427 aa).

Residue glutamine 163 coordinates (2R)-2-phosphoglycerate. Catalysis depends on glutamate 205, which acts as the Proton donor. Aspartate 242, glutamate 285, and aspartate 312 together coordinate Mg(2+). 4 residues coordinate (2R)-2-phosphoglycerate: lysine 337, arginine 366, serine 367, and lysine 388. The Proton acceptor role is filled by lysine 337.

The protein belongs to the enolase family. Mg(2+) is required as a cofactor.

Its subcellular location is the cytoplasm. The protein localises to the secreted. The protein resides in the cell surface. The catalysed reaction is (2R)-2-phosphoglycerate = phosphoenolpyruvate + H2O. Its pathway is carbohydrate degradation; glycolysis; pyruvate from D-glyceraldehyde 3-phosphate: step 4/5. Catalyzes the reversible conversion of 2-phosphoglycerate (2-PG) into phosphoenolpyruvate (PEP). It is essential for the degradation of carbohydrates via glycolysis. This Dechloromonas aromatica (strain RCB) protein is Enolase.